The chain runs to 115 residues: T cell receptor beta variable 11-3 (115 aa).

Positions 1–21 are cleaved as a signal peptide; that stretch reads MGTRLLCWVAFCLLVEELIEA. Residues 22 to 115 form the Ig-like domain; that stretch reads GVVQSPRYKI…SAVYLCASSL (94 aa). The cysteines at positions 42 and 111 are disulfide-linked.

As to quaternary structure, alpha-beta TR is a heterodimer composed of an alpha and beta chain; disulfide-linked. The alpha-beta TR is associated with the transmembrane signaling CD3 coreceptor proteins to form the TR-CD3 (TcR or TCR). The assembly of alpha-beta TR heterodimers with CD3 occurs in the endoplasmic reticulum where a single alpha-beta TR heterodimer associates with one CD3D-CD3E heterodimer, one CD3G-CD3E heterodimer and one CD247 homodimer forming a stable octameric structure. CD3D-CD3E and CD3G-CD3E heterodimers preferentially associate with TR alpha and TR beta chains, respectively. The association of the CD247 homodimer is the last step of TcR assembly in the endoplasmic reticulum and is required for transport to the cell surface.

It is found in the cell membrane. V region of the variable domain of T cell receptor (TR) beta chain that participates in the antigen recognition. Alpha-beta T cell receptors are antigen specific receptors which are essential to the immune response and are present on the cell surface of T lymphocytes. Recognize peptide-major histocompatibility (MH) (pMH) complexes that are displayed by antigen presenting cells (APC), a prerequisite for efficient T cell adaptive immunity against pathogens. Binding of alpha-beta TR to pMH complex initiates TR-CD3 clustering on the cell surface and intracellular activation of LCK that phosphorylates the ITAM motifs of CD3G, CD3D, CD3E and CD247 enabling the recruitment of ZAP70. In turn ZAP70 phosphorylates LAT, which recruits numerous signaling molecules to form the LAT signalosome. The LAT signalosome propagates signal branching to three major signaling pathways, the calcium, the mitogen-activated protein kinase (MAPK) kinase and the nuclear factor NF-kappa-B (NF-kB) pathways, leading to the mobilization of transcription factors that are critical for gene expression and essential for T cell growth and differentiation. The T cell repertoire is generated in the thymus, by V-(D)-J rearrangement. This repertoire is then shaped by intrathymic selection events to generate a peripheral T cell pool of self-MH restricted, non-autoaggressive T cells. Post-thymic interaction of alpha-beta TR with the pMH complexes shapes TR structural and functional avidity. This Homo sapiens (Human) protein is T cell receptor beta variable 11-3.